A 220-amino-acid chain; its full sequence is Iron-sulfur cluster repair protein YtfE (220 aa).

It belongs to the RIC family. YtfE subfamily. As to quaternary structure, homodimer.

It localises to the cytoplasm. In terms of biological role, di-iron-containing protein involved in the repair of iron-sulfur clusters damaged by oxidative and nitrosative stress conditions. In Salmonella paratyphi A (strain AKU_12601), this protein is Iron-sulfur cluster repair protein YtfE.